Reading from the N-terminus, the 473-residue chain is uncharacterized protein (473 aa).

The disordered stretch occupies residues 1 to 86; it reads MSSSPTESEI…NTSNYGSSRD (86 aa). A compositionally biased stretch (basic and acidic residues) spans 10 to 19; that stretch reads ILPKESHNSI. Polar residues-rich tracts occupy residues 20–39 and 55–68; these read DEQS…NSFN and EPVQ…PNMA. A Phosphoserine modification is found at S64. The segment covering 69–83 has biased composition (low complexity); the sequence is SNESGNSENTSNYGS. RRM domains are found at residues 95–165, 188–260, and 305–370; these read LWMG…NHLF, IFVG…PIRV, and VFVG…RIRL. The interval 448-473 is disordered; sequence MHIPENGNSDTMPVPNTQGKHLSAEE. Residues 453–467 show a composition bias toward polar residues; that stretch reads NGNSDTMPVPNTQGK.

This is an uncharacterized protein from Schizosaccharomyces pombe (strain 972 / ATCC 24843) (Fission yeast).